A 61-amino-acid polypeptide reads, in one-letter code: Photosystem II reaction center protein Z (61 aa).

Helical transmembrane passes span 5 to 25 and 38 to 58; these read LTAL…VALA and NKAF…DGIS.

It belongs to the PsbZ family. In terms of assembly, PSII is composed of 1 copy each of membrane proteins PsbA, PsbB, PsbC, PsbD, PsbE, PsbF, PsbH, PsbI, PsbJ, PsbK, PsbL, PsbM, PsbT, PsbX, PsbY, PsbZ, Psb30/Ycf12, at least 3 peripheral proteins of the oxygen-evolving complex and a large number of cofactors. It forms dimeric complexes.

It is found in the plastid. The protein resides in the chloroplast thylakoid membrane. Functionally, may control the interaction of photosystem II (PSII) cores with the light-harvesting antenna, regulates electron flow through the 2 photosystem reaction centers. PSII is a light-driven water plastoquinone oxidoreductase, using light energy to abstract electrons from H(2)O, generating a proton gradient subsequently used for ATP formation. The protein is Photosystem II reaction center protein Z of Skeletonema costatum (Marine centric diatom).